The sequence spans 314 residues: MSVLDQNAVDINPRISEAEVGDYIALLKPRVMSLVIFTALVGMAMAPGHFHPVLAITSLLCIAVGAGASGALNMALEGDIDAKMSRTANRPIPRGRITRPEAMTFGMTLAFFSVMTLGILVNWIAGALLAFTIFFYVVIYTMWLKRWTAQNIVIGGAAGALPPVVAWAAVTGTVDVEPLLLFAIIFFWTPPHFWALALFRSDDYARAGIPMLPNVAGPDATRLQILLYTIVLIAVAAAPWALGYFDAVYGVVSLILGAGMLVLAINVYMRRERSQSLRATRKLFAFSILYLFALFATLLAEVVFRALAPMAGGA.

Helical transmembrane passes span 31-51 (VMSL…GHFH), 52-72 (PVLA…SGAL), 119-139 (ILVN…YVVI), 152-172 (IVIG…AVTG), 179-199 (LLLF…LALF), 225-245 (ILLY…LGYF), 247-267 (AVYG…AINV), and 284-304 (FAFS…EVVF).

It belongs to the UbiA prenyltransferase family. Protoheme IX farnesyltransferase subfamily.

The protein localises to the cell inner membrane. The catalysed reaction is heme b + (2E,6E)-farnesyl diphosphate + H2O = Fe(II)-heme o + diphosphate. Its pathway is porphyrin-containing compound metabolism; heme O biosynthesis; heme O from protoheme: step 1/1. In terms of biological role, converts heme B (protoheme IX) to heme O by substitution of the vinyl group on carbon 2 of heme B porphyrin ring with a hydroxyethyl farnesyl side group. The polypeptide is Protoheme IX farnesyltransferase (Bradyrhizobium diazoefficiens (strain JCM 10833 / BCRC 13528 / IAM 13628 / NBRC 14792 / USDA 110)).